Reading from the N-terminus, the 360-residue chain is Phosphoserine aminotransferase (360 aa).

Residue R41 coordinates L-glutamate. Residues W101, T152, D172, and Q195 each contribute to the pyridoxal 5'-phosphate site. An N6-(pyridoxal phosphate)lysine modification is found at K196. Pyridoxal 5'-phosphate is bound at residue 237–238 (NT).

The protein belongs to the class-V pyridoxal-phosphate-dependent aminotransferase family. SerC subfamily. Homodimer. Requires pyridoxal 5'-phosphate as cofactor.

Its subcellular location is the cytoplasm. It carries out the reaction O-phospho-L-serine + 2-oxoglutarate = 3-phosphooxypyruvate + L-glutamate. The enzyme catalyses 4-(phosphooxy)-L-threonine + 2-oxoglutarate = (R)-3-hydroxy-2-oxo-4-phosphooxybutanoate + L-glutamate. It participates in amino-acid biosynthesis; L-serine biosynthesis; L-serine from 3-phospho-D-glycerate: step 2/3. The protein operates within cofactor biosynthesis; pyridoxine 5'-phosphate biosynthesis; pyridoxine 5'-phosphate from D-erythrose 4-phosphate: step 3/5. Its function is as follows. Catalyzes the reversible conversion of 3-phosphohydroxypyruvate to phosphoserine and of 3-hydroxy-2-oxo-4-phosphonooxybutanoate to phosphohydroxythreonine. The chain is Phosphoserine aminotransferase from Burkholderia vietnamiensis (strain G4 / LMG 22486) (Burkholderia cepacia (strain R1808)).